Reading from the N-terminus, the 270-residue chain is Ribosomal RNA small subunit methyltransferase A (270 aa).

The S-adenosyl-L-methionine site is built by asparagine 16, leucine 18, glycine 43, glutamate 64, aspartate 89, and asparagine 110.

This sequence belongs to the class I-like SAM-binding methyltransferase superfamily. rRNA adenine N(6)-methyltransferase family. RsmA subfamily.

The protein localises to the cytoplasm. The catalysed reaction is adenosine(1518)/adenosine(1519) in 16S rRNA + 4 S-adenosyl-L-methionine = N(6)-dimethyladenosine(1518)/N(6)-dimethyladenosine(1519) in 16S rRNA + 4 S-adenosyl-L-homocysteine + 4 H(+). In terms of biological role, specifically dimethylates two adjacent adenosines (A1518 and A1519) in the loop of a conserved hairpin near the 3'-end of 16S rRNA in the 30S particle. May play a critical role in biogenesis of 30S subunits. The sequence is that of Ribosomal RNA small subunit methyltransferase A from Pseudomonas fluorescens (strain ATCC BAA-477 / NRRL B-23932 / Pf-5).